The primary structure comprises 504 residues: MKNEKRKTGIEPKVFFPPLIIVGILCWLTVRDLDAANVVINAVFSYVTNVWGWAFEWYMVVMLFGWFWLVFGPYAKKRLGNEPPEFSTASWIFMMFASCTSAAVLFWGSIEIYYYISTPPFGLEPNSTGAKELGLAYSLFHWGPLPWATYSFLSVAFAYFFFVRKMEVIRPSSTLVPLVGEKHAKGLFGTIVDNFYLVALIFAMGTSLGLATPLVTECMQWLFGIPHTLQLDAIIITCWIILNAICVACGLQKGVRIASDVRSYLSFLMLGWVFIVSGASFIMNYFTDSVGMLLMYLPRMLFYTDPIAKGGFPQGWTVFYWAWWVIYAIQMSIFLARISRGRTVRELCFGMVLGLTASTWILWTVLGSNTLLLMDKNIINIPNLIEQYGVARAIIETWAALPLSTATMWGFFILCFIATVTLVNACSYTLAMSTCREVRDGEEPPLLVRIGWSILVGIIGIVLLALGGLKPIQTAIIAGGCPLFFVNIMVTLSFIKDAKQNWKD.

The next 12 membrane-spanning stretches (helical) occupy residues 10-30 (IEPK…WLTV), 51-71 (WGWA…WLVF), 92-112 (IFMM…SIEI), 143-163 (GPLP…FFFV), 195-215 (FYLV…TPLV), 231-251 (LDAI…ACGL), 263-283 (SYLS…SFIM), 316-336 (WTVF…IFLA), 347-367 (LCFG…TVLG), 398-418 (WAAL…CFIA), 446-466 (LLVR…LLAL), and 475-495 (AIIA…LSFI).

It belongs to the BCCT transporter (TC 2.A.15) family. CaiT subfamily. Homotrimer.

It localises to the cell inner membrane. It catalyses the reaction 4-(trimethylamino)butanoate(in) + (R)-carnitine(out) = 4-(trimethylamino)butanoate(out) + (R)-carnitine(in). The protein operates within amine and polyamine metabolism; carnitine metabolism. Its function is as follows. Catalyzes the exchange of L-carnitine for gamma-butyrobetaine. The chain is L-carnitine/gamma-butyrobetaine antiporter from Escherichia coli (strain ATCC 8739 / DSM 1576 / NBRC 3972 / NCIMB 8545 / WDCM 00012 / Crooks).